Reading from the N-terminus, the 273-residue chain is Suppressor protein STM1 (273 aa).

The interval 1-153 is disordered; that stretch reads MSNPFDLLGN…PKTAQLSLQD (153 aa). Ser-2 bears the N-acetylserine mark. Residues Ser-32, Ser-41, and Ser-45 each carry the phosphoserine; by MTOR modification. Residue Lys-46 forms a Glycyl lysine isopeptide (Lys-Gly) (interchain with G-Cter in ubiquitin) linkage. Ser-55 and Ser-73 each carry phosphoserine; by MTOR. Ser-55 carries the post-translational modification Phosphoserine. Basic and acidic residues-rich tracts occupy residues 60 to 77, 89 to 104, and 111 to 124; these read AIRDKTAGRRNNRSKDVT, RATDRHSRTGKTDTKK, and GDDKKELSAEKEAQ. The residue at position 118 (Ser-118) is a Phosphoserine. Glycyl lysine isopeptide (Lys-Gly) (interchain with G-Cter in ubiquitin) cross-links involve residues Lys-121 and Lys-171. Position 181 is a phosphothreonine; by MTOR (Thr-181). A Glycyl lysine isopeptide (Lys-Gly) (interchain with G-Cter in ubiquitin) cross-link involves residue Lys-184. Position 218 is a phosphothreonine; by MTOR (Thr-218). Positions 219–273 are disordered; it reads RKNFGDRNNNSRNNFNNRRGGRGARKGNNTANATNSANTVQKNRNIDVSNLPSLA. Composition is skewed to low complexity over residues 224-236 and 244-257; these read DRNNNSRNNFNNR and KGNNTANATNSANT. The residue at position 229 (Ser-229) is a Phosphoserine. The segment covering 258–273 has biased composition (polar residues); the sequence is VQKNRNIDVSNLPSLA.

This sequence belongs to the SERBP1-HABP4 family. As to quaternary structure, associates with mature 80S ribosomes. Binds to the head domain of the 40S ribosomal subunit and prevents mRNA binding by inserting its alpha-helix domain towards the mRNA entry tunnel at the decoding site, where it blocks the binding of tRNA and mRNA at the A- and P-sites. Interacts with EFT1; interaction sequesters EFT1 at the A-site of the ribosome, thereby blocking the interaction sites of the mRNA-tRNA complex, promoting ribosome stabilization and hibernation. Interacts with CDC13. Associates with the telomere-proximal Y' element. Phosphorylation by TORC1 upon nutrient replenishment inhibits STM1 and causes its release from dormant ribosomes.

It is found in the cytoplasm. It localises to the nucleus. Its subcellular location is the perinuclear region. Ribosome preservation factor that protect a small pool of nontranslating, vacant ribosomes in cells under nutrient starvation conditions. Under nutrient-limiting conditions, cells reduce ribosome biogenesis and degrade ribosomes via autophagy (ribophagy) or proteasomal degradation. To avoid excessive degradation during starvation, STM1 binds to and protects 80S ribosomes from proteasomal degradation. Under nutrient-sufficient conditions, TORC1 phosphorylates and inhibits STM1 to prevent formation of dormant 80S ribosomes. Acts as an inhibitor of mRNA translation by promoting ribosome hibernation: clamps the two ribosomal subunits, thereby preventing their dissociation, and inhibits translation by excluding mRNA-binding. Acts via its association with eEF2 (EFT1), promoting ribosome stabilization and storage in an inactive state. May also repress translation by preventing association of eEF3 (YEF3 and HEF3) with ribosomes. Binds specifically G4 quadruplex (these are four-stranded right-handed helices, stabilized by guanine base quartets) and purine motif triplex (characterized by a third, antiparallel purine-rich DNA strand located within the major groove of a homopurine stretch of duplex DNA) nucleic acid structures. These structures may be present at telomeres or in rRNAs. Acts with CDC13 to control telomere length homeostasis. Involved in the control of the apoptosis-like cell death. In Saccharomyces cerevisiae (strain ATCC 204508 / S288c) (Baker's yeast), this protein is Suppressor protein STM1.